A 326-amino-acid polypeptide reads, in one-letter code: GDP-mannose transporter (326 aa).

Residues 1 to 4 (MEKS) lie on the Cytoplasmic side of the membrane. Residues 5–25 (ITNSPVLSILSYCAASILMTV) traverse the membrane as a helical segment. At 26 to 35 (TNKYVLSGTS) the chain is on the lumenal side. The helical transmembrane segment at 36–56 (FNLNLALLAVQSIVCLTAISI) threads the bilayer. At 57–74 (GKSFGLCKFRSFNADEAK) the chain is on the cytoplasmic side. A helical membrane pass occupies residues 75–97 (KWFPIALLLVVMIYTSSKALQFL). Over 98 to 100 (SIP) the chain is Lumenal. Residues 101–123 (VYTIFKNLTIILIAYGEVLWFGG) form a helical membrane-spanning segment. Residues 124-129 (SVTSMA) lie on the Cytoplasmic side of the membrane. The helical transmembrane segment at 130-152 (LASFVLMVLSSVIAAWSDISGAI) threads the bilayer. The Lumenal segment spans residues 153 to 163 (AVSGSATTTVT). Residues 164–184 (ALNIGYFWMMSNCFASAAFVL) traverse the membrane as a helical segment. The Cytoplasmic portion of the chain corresponds to 185 to 208 (YMRKRIKLTNFGDFDTTFYNNLLS). Residues 209-229 (IPVLLIASLLFEDWSPANLAV) traverse the membrane as a helical segment. Topologically, residues 230 to 237 (NFPPESRN) are lumenal. Residues 238 to 258 (LIFFSMVVSGLMSIGISYCSA) form a helical membrane-spanning segment. At 259-268 (WCVRVTSSTT) the chain is on the cytoplasmic side. Residues 269–289 (YSMVGALNKLPLALSGIVFFG) traverse the membrane as a helical segment. The Lumenal portion of the chain corresponds to 290–291 (TP). Residues 292-312 (ATFSSVSAIFVGFVAGIVYAV) form a helical membrane-spanning segment. Residues 313 to 326 (AQIQKKKAEAALPK) lie on the Cytoplasmic side of the membrane.

The protein belongs to the TPT transporter family. SLC35D subfamily. As to quaternary structure, homooligomer.

It is found in the golgi apparatus membrane. The protein localises to the cytoplasmic vesicle membrane. It localises to the endoplasmic reticulum membrane. Functionally, involved in the import of GDP-mannose from the cytoplasm into the Golgi lumen. This Yarrowia lipolytica (strain CLIB 122 / E 150) (Yeast) protein is GDP-mannose transporter (VRG4).